The sequence spans 361 residues: Thermostable alkaline protease (361 aa).

The first 24 residues, M1 to A24, serve as a signal peptide directing secretion. Positions S25–S93 are excised as a propeptide. Q94 is a binding site for Ca(2+). The 264-residue stretch at P97–T360 folds into the Peptidase S8 domain. D124 functions as the Charge relay system in the catalytic mechanism. D132 serves as a coordination point for Ca(2+). H154 acts as the Charge relay system in catalysis. Positions 165, 167, 169, 171, 255, 257, and 260 each coordinate Ca(2+). S307 (charge relay system) is an active-site residue.

Belongs to the peptidase S8 family. It depends on Ca(2+) as a cofactor.

It is found in the secreted. Its function is as follows. Shows keratinolytic activity. This Halalkalibacterium halodurans (strain ATCC BAA-125 / DSM 18197 / FERM 7344 / JCM 9153 / C-125) (Bacillus halodurans) protein is Thermostable alkaline protease.